The following is a 124-amino-acid chain: UPF0231 protein Sbal223_3655 (124 aa).

It belongs to the UPF0231 family.

The polypeptide is UPF0231 protein Sbal223_3655 (Shewanella baltica (strain OS223)).